The sequence spans 1133 residues: Protein TOPLESS-RELATED PROTEIN 2 (1133 aa).

Residues 4–36 (LSRELVFLILQFLDEEKFKETVHKLEQESAFYF) form the LisH domain. In terms of domain architecture, CTLH spans 34–92 (FYFNMKHFEDLVQGGEWDEVEKYLSGFTKVEDNRYSMKIFFEIRKQKYLEALDRHDRAK). WD repeat units lie at residues 344–384 (NQGS…RIAH), 451–492 (AHIG…KQYT), 495–536 (GHEA…SRVD), 539–582 (APGH…IKRT), 586–625 (FRKR…ILTT), 630–669 (GGLP…RLLR), 771–810 (ATSS…RNPN), 838–876 (NPEE…VMTT), 879–919 (APPP…VKSK), 922–961 (GHSK…KKKS), 970–1011 (RSGA…RSWS), and 1015–1054 (ALPA…LRCR). Residues 1102–1133 (DSDPKWGVAPPQDNGTHPTISAAPAAANKPEV) form a disordered region.

Tetramer. Interacts with D53, probably via the EAR motifs. Binds to AP2-1/TOE1, AP2-3/SNB and AP2-2/IDS1. Interacts with WOX1. Interacts with MOF1. Expressed in stems and panicles. Detected in roots, seeds, leaves and sheath. Expressed in the meristem and lateral organ primordia.

It is found in the nucleus. Transcriptional corepressor involved in branch formation regulation, presumably by suppressing primary branch formation and promoting secondary branch formation. Required for the cell elongation in the first internode and pollen development. Probable downstream regulator of strigolactones signaling important in axillary meristem maintenance. Acts in auxin signaling and is associated with the regulation of histone deacetylation. Essential for the function of miR172 microRNA and its target genes in regulating panicle development. In Oryza sativa subsp. japonica (Rice), this protein is Protein TOPLESS-RELATED PROTEIN 2.